The sequence spans 141 residues: Hemoglobin subunit alpha-A (141 aa).

Residues 1–141 enclose the Globin domain; that stretch reads VLSGTDKTNV…VGAVLTAKYR (141 aa). Residue His-58 participates in O2 binding. A heme b-binding site is contributed by His-87.

The protein belongs to the globin family. As to quaternary structure, heterotetramer of two alpha chains and two beta chains. In terms of tissue distribution, red blood cells.

In terms of biological role, involved in oxygen transport from the lung to the various peripheral tissues. This is Hemoglobin subunit alpha-A (HBAA) from Struthio camelus (Common ostrich).